Consider the following 254-residue polypeptide: 5'-nucleotidase SurE (254 aa).

D8, D9, S38, and N91 together coordinate a divalent metal cation.

Belongs to the SurE nucleotidase family. A divalent metal cation is required as a cofactor.

It is found in the cytoplasm. The enzyme catalyses a ribonucleoside 5'-phosphate + H2O = a ribonucleoside + phosphate. Its function is as follows. Nucleotidase that shows phosphatase activity on nucleoside 5'-monophosphates. This Anaeromyxobacter dehalogenans (strain 2CP-1 / ATCC BAA-258) protein is 5'-nucleotidase SurE.